The chain runs to 110 residues: Hydrogenase maturation factor HypA (110 aa).

His2 contacts Ni(2+). The Zn(2+) site is built by Cys73, Cys76, Cys87, and Cys89.

The protein belongs to the HypA/HybF family.

Functionally, involved in the maturation of [NiFe] hydrogenases. Required for nickel insertion into the metal center of the hydrogenase. This Archaeoglobus fulgidus (strain ATCC 49558 / DSM 4304 / JCM 9628 / NBRC 100126 / VC-16) protein is Hydrogenase maturation factor HypA.